A 140-amino-acid chain; its full sequence is PDZ domain-containing protein 11 (140 aa).

One can recognise a PDZ domain in the interval 47 to 129 (IVTLKKPPGA…ISMRVRFFPY (83 aa)).

In terms of assembly, interacts with ATP2B1, ATP2B2, ATP2B3, ATP2B4 and ATP7A. Interacts with PLEKHA7 (via WW domains) at zonula adherens; this interaction is essential for the interaction between PLEKHA7 and the ADAM10-binding protein TSPAN33. Interacts with SLC5A6.

The protein resides in the cytoplasm. The protein localises to the cell junction. It is found in the adherens junction. It localises to the cell membrane. Mediates docking of ADAM10 to zonula adherens by interacting with PLEKHA7 which is required for PLEKHA7 to interact with the ADAM10-binding protein TSPAN33. The sequence is that of PDZ domain-containing protein 11 (PDZD11) from Bos taurus (Bovine).